Reading from the N-terminus, the 479-residue chain is Sulfate adenylyltransferase subunit 1 (479 aa).

One can recognise a tr-type G domain in the interval 25–239 (KSLLRFLTCG…EVLETVDIQR (215 aa)). The interval 34-41 (GSVDDGKS) is G1. A GTP-binding site is contributed by 34-41 (GSVDDGKS). The tract at residues 92 to 96 (GITID) is G2. The G3 stretch occupies residues 113–116 (DTPG). Residues 113–117 (DTPGH) and 168–171 (NKMD) each bind GTP. Residues 168 to 171 (NKMD) are G4. A G5 region spans residues 206 to 208 (SAL).

Belongs to the TRAFAC class translation factor GTPase superfamily. Classic translation factor GTPase family. CysN/NodQ subfamily. Heterodimer composed of CysD, the smaller subunit, and CysN.

The enzyme catalyses sulfate + ATP + H(+) = adenosine 5'-phosphosulfate + diphosphate. It functions in the pathway sulfur metabolism; hydrogen sulfide biosynthesis; sulfite from sulfate: step 1/3. In terms of biological role, with CysD forms the ATP sulfurylase (ATPS) that catalyzes the adenylation of sulfate producing adenosine 5'-phosphosulfate (APS) and diphosphate, the first enzymatic step in sulfur assimilation pathway. APS synthesis involves the formation of a high-energy phosphoric-sulfuric acid anhydride bond driven by GTP hydrolysis by CysN coupled to ATP hydrolysis by CysD. The chain is Sulfate adenylyltransferase subunit 1 from Salmonella choleraesuis (strain SC-B67).